A 47-amino-acid chain; its full sequence is Conotoxin Cal6.18 (47 aa).

Residues 1–19 (MKLTYVLIVAMLVLVVCRA) form the signal peptide.

This sequence belongs to the conotoxin O1 superfamily. Post-translationally, may contain 3 disulfide bonds. Expressed by the venom duct.

The protein localises to the secreted. Functionally, probable neurotoxin. The polypeptide is Conotoxin Cal6.18 (Californiconus californicus (California cone)).